A 175-amino-acid chain; its full sequence is uncharacterized protein (175 aa).

The span at 35-56 (LIENSNYDNNNINNNNNNNNTD) shows a compositional bias: low complexity. The tract at residues 35–70 (LIENSNYDNNNINNNNNNNNTDNDNDNNNDNEPFYN) is disordered. 2 helical membrane passes run 106–126 (ILSF…FFNY) and 132–152 (YFII…KSIF).

Its subcellular location is the membrane. This is an uncharacterized protein from Dictyostelium discoideum (Social amoeba).